Here is a 382-residue protein sequence, read N- to C-terminus: MKIILVVFVLIFVGVIGFNMIKGVMISRAIAGMPESSSPVTALEVQPREWTPVINTTGLVRPNQGAMLSTQNAGAVSQVLVQNGQNVKKGEVLVELDSSVERANLQAAQAQLSALRQTYQRYVGLLNSNAVSRQEMDNAKAAYDAQVASIESLKAAIERRKIVAPFDGKAGIVKINVGQYVNVGTEIVRVEDTSSMKVDFALSQNDLDKLHIGQRVTATTDARLGETFSARITAIEPAINSSTGLVDVQATFDPEDGHKLLSGMFSRLRIALPTETNQVVVPQVAISYNMYGEIAYLLEPLSEEEKGKMSGNEKLDRLYRAKQITVFTKDRQGVYAQLQGNEVKVGDKIITGGQQGIGNGSLVEWIKKDIVGAIEPAHKTPL.

A helical transmembrane segment spans residues 1-21 (MKIILVVFVLIFVGVIGFNMI).

It belongs to the membrane fusion protein (MFP) (TC 8.A.1) family.

The protein resides in the membrane. This is an uncharacterized protein from Haemophilus influenzae (strain ATCC 51907 / DSM 11121 / KW20 / Rd).